The following is a 119-amino-acid chain: Large ribosomal subunit protein uL22 (119 aa).

The protein belongs to the universal ribosomal protein uL22 family. Part of the 50S ribosomal subunit.

In terms of biological role, this protein binds specifically to 23S rRNA; its binding is stimulated by other ribosomal proteins, e.g. L4, L17, and L20. It is important during the early stages of 50S assembly. It makes multiple contacts with different domains of the 23S rRNA in the assembled 50S subunit and ribosome. Functionally, the globular domain of the protein is located near the polypeptide exit tunnel on the outside of the subunit, while an extended beta-hairpin is found that lines the wall of the exit tunnel in the center of the 70S ribosome. The protein is Large ribosomal subunit protein uL22 of Rickettsia peacockii (strain Rustic).